A 676-amino-acid polypeptide reads, in one-letter code: RNA helicase NPH-II (676 aa).

The 176-residue stretch at F172–H347 folds into the Helicase ATP-binding domain. G185–T192 contributes to the ATP binding site. The DEXH box signature appears at D296–H299. One can recognise a Helicase C-terminal domain in the interval N366 to N535.

The protein belongs to the DEAD box helicase family. DEAH subfamily. As to quaternary structure, monomer.

The protein localises to the virion. It catalyses the reaction ATP + H2O = ADP + phosphate + H(+). NTP-dependent helicase that catalyzes unidirectional unwinding of 3'tailed duplex RNAs and plays an important role during transcription of early mRNAs, presumably by preventing R-loop formation behind the elongating RNA polymerase. Might also play a role in the export of newly synthesized mRNA chains out of the core into the cytoplasm. Required for replication and propagation of viral particles. The chain is RNA helicase NPH-II (OPG084) from Homo sapiens (Human).